The following is a 420-amino-acid chain: Heterogeneous nuclear ribonucleoprotein D-like (420 aa).

Disordered regions lie at residues M1–P83 and Q96–M120. R25 bears the Omega-N-methylarginine mark. Over residues R36–Q52 the composition is skewed to low complexity. 2 RRM domains span residues G148–E230 and K233–E312. K161 carries the post-translational modification N6-methyllysine. K209 participates in a covalent cross-link: Glycyl lysine isopeptide (Lys-Gly) (interchain with G-Cter in SUMO2). The residue at position 216 (K216) is an N6-acetyllysine. S241 bears the Phosphoserine mark. Disordered stretches follow at residues V313–Q348 and G398–Y420. Residues G323–Q342 are compositionally biased toward gly residues. The interval Q342–Y420 is necessary for interaction with TNPO1. The interval Y396–Y420 is necessary for its nuclear import and export. R408 carries the dimethylated arginine; alternate modification. Residue R408 is modified to Omega-N-methylarginine; alternate.

As to quaternary structure, interacts with ZNF148. Interacts with TNPO1. Dimethylation of Arg-408 is probably of the asymmetric type. As to expression, expressed in heart, brain, placenta, lung, liver, skeletal muscle, kidney, pancreas, spleen, thymus, prostate, testis, ovary, small intestine, colon and leukocytes. Expressed in myeloid leukemia, gastric adenocarcinoma, cervical carcinoma, hepatoma, fibrosarcoma, colon adenocarcinoma, epidermoid carcinoma, osteosarcoma and urinary bladder carcinoma cells.

The protein resides in the nucleus. Its subcellular location is the cytoplasm. Its function is as follows. Acts as a transcriptional regulator. Promotes transcription repression. Promotes transcription activation in differentiated myotubes. Binds to double- and single-stranded DNA sequences. Binds to the transcription suppressor CATR sequence of the COX5B promoter. Binds with high affinity to RNA molecules that contain AU-rich elements (AREs) found within the 3'-UTR of many proto-oncogenes and cytokine mRNAs. Binds both to nuclear and cytoplasmic poly(A) mRNAs. Binds to poly(G) and poly(A), but not to poly(U) or poly(C) RNA homopolymers. Binds to the 5'-ACUAGC-3' RNA consensus sequence. This Homo sapiens (Human) protein is Heterogeneous nuclear ribonucleoprotein D-like (HNRNPDL).